Consider the following 188-residue polypeptide: Molybdopterin synthase catalytic subunit (188 aa).

A Phosphoserine modification is found at serine 20. Substrate contacts are provided by residues 143–144 (HR), lysine 159, and 166–168 (KKE).

It belongs to the MoaE family. MOCS2B subfamily. As to quaternary structure, heterotetramer; composed of 2 small (MOCS2A) and 2 large (MOCS2B) subunits. In terms of tissue distribution, highest levels are found in heart and skeletal muscle. Lower levels are present in brain, kidney and pancreas. Very low levels are found in lung and peripheral blood leukocytes.

The protein resides in the cytoplasm. The protein localises to the cytosol. The catalysed reaction is 2 [molybdopterin-synthase sulfur-carrier protein]-C-terminal-Gly-aminoethanethioate + cyclic pyranopterin phosphate + H2O = molybdopterin + 2 [molybdopterin-synthase sulfur-carrier protein]-C-terminal Gly-Gly + 2 H(+). The protein operates within cofactor biosynthesis; molybdopterin biosynthesis. Catalytic subunit of the molybdopterin synthase complex, a complex that catalyzes the conversion of precursor Z into molybdopterin. Acts by mediating the incorporation of 2 sulfur atoms from thiocarboxylated MOCS2A into precursor Z to generate a dithiolene group. In Homo sapiens (Human), this protein is Molybdopterin synthase catalytic subunit.